Reading from the N-terminus, the 431-residue chain is Enolase (431 aa).

Residues 27–47 (LESGHSGRAAVPSGASTGSRE) are disordered. Glutamine 163 serves as a coordination point for (2R)-2-phosphoglycerate. Glutamate 205 functions as the Proton donor in the catalytic mechanism. Mg(2+) is bound by residues aspartate 242, glutamate 285, and aspartate 312. Lysine 337, arginine 366, serine 367, and lysine 388 together coordinate (2R)-2-phosphoglycerate. The active-site Proton acceptor is the lysine 337.

The protein belongs to the enolase family. Requires Mg(2+) as cofactor.

It localises to the cytoplasm. The protein resides in the secreted. Its subcellular location is the cell surface. It carries out the reaction (2R)-2-phosphoglycerate = phosphoenolpyruvate + H2O. The protein operates within carbohydrate degradation; glycolysis; pyruvate from D-glyceraldehyde 3-phosphate: step 4/5. In terms of biological role, catalyzes the reversible conversion of 2-phosphoglycerate (2-PG) into phosphoenolpyruvate (PEP). It is essential for the degradation of carbohydrates via glycolysis. This Oleidesulfovibrio alaskensis (strain ATCC BAA-1058 / DSM 17464 / G20) (Desulfovibrio alaskensis) protein is Enolase.